The primary structure comprises 74 residues: uncharacterized protein (74 aa).

A helical transmembrane segment spans residues 8–30 (LAAAVSSSAASAGVSRIAASAMA).

Its subcellular location is the mitochondrion outer membrane. This is an uncharacterized protein from Saccharomyces cerevisiae (strain ATCC 204508 / S288c) (Baker's yeast).